A 383-amino-acid polypeptide reads, in one-letter code: Opsin Rh4 (383 aa).

At 1–57 (MDIAGSLCNASEGPVLRPEARVSGNGDLQFLGWNVPPDQIQHIPEHWLTQLEPPASM) the chain is on the extracellular side. A glycan (N-linked (GlcNAc...) asparagine) is linked at asparagine 9. A helical transmembrane segment spans residues 58-82 (HYMLGVFYIFLFCASTVGNGMVIWI). Residues 83 to 94 (FSTSKALRTPSN) lie on the Cytoplasmic side of the membrane. A helical transmembrane segment spans residues 95 to 117 (MFVLNLAVFDFIMCLKAPIFIYN). The Extracellular segment spans residues 118 to 133 (SFHRGFALGNTGCQIF). Cysteines 130 and 207 form a disulfide. The chain crosses the membrane as a helical span at residues 134-153 (AAIGSYSGIGAGMTNAAIGY). Residues 154-171 (DRLNVITKPMNRNMTFTK) lie on the Cytoplasmic side of the membrane. The chain crosses the membrane as a helical span at residues 172-196 (AIIMNVIIWLYCTPWVVLPLTQFWD). Over 197-220 (RFVPEGYLTSCTFDYLTDNFDTRL) the chain is Extracellular. A helical membrane pass occupies residues 221–248 (FVGTIFFFSFVCPTLMIIYYYSQIVGHV). Over 249 to 284 (FSHEKALREQAKKMNVESLRSNVDKSKDTAEIRIAK) the chain is Cytoplasmic. The chain crosses the membrane as a helical span at residues 285–308 (AAITICFLFFVSWTPYGVMSLIGA). The Extracellular portion of the chain corresponds to 309-316 (FGDKSLLT). A helical membrane pass occupies residues 317–341 (PGATMIPACTCKLVACIDPFVYAIS). Position 328 is an N6-(retinylidene)lysine (lysine 328). The Cytoplasmic segment spans residues 342–383 (HPRYRMELQKRCPWLAIDEKAPESSSAASTTTTQEQQQTTAA). Residues 361 to 383 (KAPESSSAASTTTTQEQQQTTAA) form a disordered region. Over residues 364 to 383 (ESSSAASTTTTQEQQQTTAA) the composition is skewed to low complexity.

It belongs to the G-protein coupled receptor 1 family. Opsin subfamily. Post-translationally, phosphorylated on some or all of the serine and threonine residues present in the C-terminal region.

It localises to the membrane. In terms of biological role, visual pigments are the light-absorbing molecules that mediate vision. They consist of an apoprotein, opsin, covalently linked to cis-retinal. This chain is Opsin Rh4 (Rh4), found in Drosophila virilis (Fruit fly).